A 255-amino-acid polypeptide reads, in one-letter code: Complement C1q-like protein 3 (255 aa).

The signal sequence occupies residues 1–20; it reads MVLLLVILIPVLVSSAGTSA. Residues 39 to 109 are disordered; that stretch reads KAPSTAATPD…GLPGPPGAPG (71 aa). Residues 61 to 111 enclose the Collagen-like domain; it reads GPKGEAGRPGKAGPRGPPGEPGPPGPVGPPGEKGEPGRQGLPGPPGAPGLN. Residues 75–89 are compositionally biased toward pro residues; that stretch reads RGPPGEPGPPGPVGP. The C1q domain maps to 122 to 255; sequence STVPKIAFYA…TFSGFIIYAD (134 aa).

As to quaternary structure, forms homooligomers. Interacts with ADGRB3. Forms heterooligomers with C1QL2 and C1QL4, when proteins are coexpressed; this interaction does not occur after secretion. Highly expressed in brain and white adipose tissue. In gonadal fat pad, expressed at lower levels in adipocytes than in the stromal vascular fraction (VSP), which contains preadipocytes, fibroblasts, endothelial cells and occasional immune cells. Expression exhibits sexually dimorphism, with higher levels in females than in males (at protein level). Tends to be up-regulated in adipose tissue from obese males, but not females. Expressed in glial cells.

It is found in the secreted. Its function is as follows. May regulate the number of excitatory synapses that are formed on hippocampus neurons. Has no effect on inhibitory synapses. Plays a role in glucose homeostasis. Via AMPK signaling pathway, stimulates glucose uptake in adipocytes, myotubes and hepatocytes and enhances insulin-stimulated glucose uptake. In a hepatoma cell line, reduces the expression of gluconeogenic enzymes G6PC1 and PCK1 and hence decreases de novo glucose production. This Mus musculus (Mouse) protein is Complement C1q-like protein 3 (C1ql3).